Reading from the N-terminus, the 283-residue chain is Large ribosomal subunit protein uL2c (283 aa).

The interval 229–274 (GVVMNPIDHPHGGGEGKVPIGRKKPLTPWGHPALGRKSRKRRKYSD) is disordered. The segment covering 262–271 (LGRKSRKRRK) has biased composition (basic residues).

It belongs to the universal ribosomal protein uL2 family. As to quaternary structure, part of the 50S ribosomal subunit.

It localises to the plastid. The protein is Large ribosomal subunit protein uL2c (rpl2) of Aneura mirabilis (Parasitic liverwort).